Here is a 467-residue protein sequence, read N- to C-terminus: Cysteine--tRNA ligase (467 aa).

Zn(2+) is bound at residue Cys29. The 'HIGH' region signature appears at 31-41 (PTVYDDSHLGH). A disordered region spans residues 155 to 174 (KLSGRGEDLEQVSRIESSEE). Residues 158–174 (GRGEDLEQVSRIESSEE) are compositionally biased toward basic and acidic residues. Zn(2+) is bound by residues Cys210, His239, and Glu243. A 'KMSKS' region motif is present at residues 271–275 (KMSKS). ATP is bound at residue Lys274.

This sequence belongs to the class-I aminoacyl-tRNA synthetase family. In terms of assembly, monomer. Requires Zn(2+) as cofactor.

It localises to the cytoplasm. The enzyme catalyses tRNA(Cys) + L-cysteine + ATP = L-cysteinyl-tRNA(Cys) + AMP + diphosphate. The protein is Cysteine--tRNA ligase of Wolinella succinogenes (strain ATCC 29543 / DSM 1740 / CCUG 13145 / JCM 31913 / LMG 7466 / NCTC 11488 / FDC 602W) (Vibrio succinogenes).